The following is an 816-amino-acid chain: Sucrose synthase 2 (816 aa).

Residues 280-757 (MVLNVVILSP…GLQRIEEKYT (478 aa)) form a GT-B glycosyltransferase region.

Belongs to the glycosyltransferase 1 family. Plant sucrose synthase subfamily. As to quaternary structure, forms homotetramers and heterotetramers with SS1, all three possible heterotetramers are formed. Abundant in developing endosperm, low in aleurone, and undetected in coleoptiles and roots. Also detected in crude extracts of anthers and in immature embryos.

The enzyme catalyses an NDP-alpha-D-glucose + D-fructose = a ribonucleoside 5'-diphosphate + sucrose + H(+). Its function is as follows. Sucrose-cleaving enzyme that provides UDP-glucose and fructose for various metabolic pathways. This Hordeum vulgare (Barley) protein is Sucrose synthase 2 (SS2).